We begin with the raw amino-acid sequence, 302 residues long: Pantothenate synthetase 4 (302 aa).

51-58 is an ATP binding site; the sequence is MGALHEGH. The active-site Proton donor is histidine 58. Glutamine 82 is a binding site for (R)-pantoate. Residue glutamine 82 participates in beta-alanine binding. 166–169 serves as a coordination point for ATP; it reads GRKD. Position 172 (glutamine 172) interacts with (R)-pantoate. ATP is bound by residues alanine 195 and 203 to 206; that span reads RSSR.

Belongs to the pantothenate synthetase family. As to quaternary structure, homodimer.

The protein localises to the cytoplasm. It catalyses the reaction (R)-pantoate + beta-alanine + ATP = (R)-pantothenate + AMP + diphosphate + H(+). Its pathway is cofactor biosynthesis; (R)-pantothenate biosynthesis; (R)-pantothenate from (R)-pantoate and beta-alanine: step 1/1. Catalyzes the condensation of pantoate with beta-alanine in an ATP-dependent reaction via a pantoyl-adenylate intermediate. The chain is Pantothenate synthetase 4 from Frankia alni (strain DSM 45986 / CECT 9034 / ACN14a).